Reading from the N-terminus, the 525-residue chain is ESX-1 secretion-associated protein EspE (525 aa).

2 disordered regions span residues 244-341 and 375-494; these read AVAG…PGAA and ALQA…APVH. The span at 248–258 shows a compositional bias: acidic residues; sequence DADDTTADDTA. A compositionally biased stretch (basic and acidic residues) spans 274-286; the sequence is ETSKEDGQSRHEN. Over residues 292–306 the composition is skewed to gly residues; sequence SGGGGGATSGGGGGA. 3 stretches are compositionally biased toward low complexity: residues 307-319, 332-341, and 375-397; these read PSSASSAGPAGTP, TPTDAQPGAA, and ALQAATQAGAQAAQLAGQAAAAP. Positions 411–440 are enriched in basic and acidic residues; that stretch reads DPDAEGDKDSDKRDGEGKEDGTAPRDREST.

The protein localises to the cytoplasm. This chain is ESX-1 secretion-associated protein EspE, found in Mycolicibacterium smegmatis (strain ATCC 700084 / mc(2)155) (Mycobacterium smegmatis).